Here is a 407-residue protein sequence, read N- to C-terminus: Argininosuccinate synthase (407 aa).

ATP-binding positions include 12-20 (AFSGGLDTS) and Ala-39. Positions 90 and 95 each coordinate L-citrulline. Gly-120 contacts ATP. The L-aspartate site is built by Thr-122, Asn-126, and Asp-127. Residue Asn-126 coordinates L-citrulline. 5 residues coordinate L-citrulline: Arg-130, Ser-181, Ser-190, Glu-266, and Tyr-278.

This sequence belongs to the argininosuccinate synthase family. Type 1 subfamily. As to quaternary structure, homotetramer.

The protein localises to the cytoplasm. The catalysed reaction is L-citrulline + L-aspartate + ATP = 2-(N(omega)-L-arginino)succinate + AMP + diphosphate + H(+). The protein operates within amino-acid biosynthesis; L-arginine biosynthesis; L-arginine from L-ornithine and carbamoyl phosphate: step 2/3. This is Argininosuccinate synthase from Nitrosospira multiformis (strain ATCC 25196 / NCIMB 11849 / C 71).